A 435-amino-acid polypeptide reads, in one-letter code: Eukaryotic translation initiation factor 3 subunit E (435 aa).

Residues 219 to 392 (FFNHPKGRDL…GHVVMGTQPL (174 aa)) enclose the PCI domain.

Belongs to the eIF-3 subunit E family. In terms of assembly, component of the eukaryotic translation initiation factor 3 (eIF-3) complex. The eIF-3 complex interacts with pix. Interacts with mxt. Expression levels in females and males are relatively similar 10 days after oviposition, however by day 15 expression is higher in gravid females than in males (at protein level).

It is found in the cytoplasm. The protein localises to the microsome. The protein resides in the endoplasmic reticulum. In terms of biological role, component of the eukaryotic translation initiation factor 3 (eIF-3) complex, which is involved in protein synthesis of a specialized repertoire of mRNAs and, together with other initiation factors, stimulates binding of mRNA and methionyl-tRNAi to the 40S ribosome. The eIF-3 complex specifically targets and initiates translation of a subset of mRNAs involved in cell proliferation. In addition to its role in the eIF-3 complex, also functions in protein ubiquitination and degradation. During mitosis required for regulating mitotic microtubule growth and kinetochore formation, and consequently is required for satisfying the spindle assembly checkpoint (SAC) during metaphase to prevent delays in mitotic progression. This is likely by promoting the ubiquitination and degradation of Klp67A, a kinesin-like protein that suppresses microtubule polymerization at plus ends. Acts in the COP9 signalosome (CSN) mediated regulation of cullin neddylation by promoting Cul1 and Cul3 neddylation and negatively regulating the CSN complex subunit CSN5. This is Eukaryotic translation initiation factor 3 subunit E from Drosophila melanogaster (Fruit fly).